Reading from the N-terminus, the 509-residue chain is tRNA-2-methylthio-N(6)-dimethylallyladenosine synthase (509 aa).

Residues 1 to 13 show a composition bias toward polar residues; it reads MNEQQRLASQQAN. Positions 1 to 26 are disordered; that stretch reads MNEQQRLASQQANSSKKKEEKDYSKY. The segment covering 16-25 has biased composition (basic and acidic residues); the sequence is KKKEEKDYSK. Positions 66–184 constitute an MTTase N-terminal domain; the sequence is RKFYIRTYGC…LPYILKDAMF (119 aa). [4Fe-4S] cluster is bound by residues C75, C111, C145, C221, C225, and C228. Residues 207 to 437 enclose the Radical SAM core domain; sequence RRGDIKAWVN…NALVNKLAIE (231 aa). Residues 440–503 form the TRAM domain; sequence NRYKGQIVEV…TWSLNGELVE (64 aa).

Belongs to the methylthiotransferase family. MiaB subfamily. In terms of assembly, monomer. [4Fe-4S] cluster serves as cofactor.

Its subcellular location is the cytoplasm. It catalyses the reaction N(6)-dimethylallyladenosine(37) in tRNA + (sulfur carrier)-SH + AH2 + 2 S-adenosyl-L-methionine = 2-methylsulfanyl-N(6)-dimethylallyladenosine(37) in tRNA + (sulfur carrier)-H + 5'-deoxyadenosine + L-methionine + A + S-adenosyl-L-homocysteine + 2 H(+). In terms of biological role, catalyzes the methylthiolation of N6-(dimethylallyl)adenosine (i(6)A), leading to the formation of 2-methylthio-N6-(dimethylallyl)adenosine (ms(2)i(6)A) at position 37 in tRNAs that read codons beginning with uridine. In Bacillus cereus (strain ATCC 10987 / NRS 248), this protein is tRNA-2-methylthio-N(6)-dimethylallyladenosine synthase.